The following is a 161-amino-acid chain: MSQLTHINAAGEAHMVDVSAKAETVREARAEAFVTMRSETLAMIIDGSHHKGDVFATARIAGIQAAKRTWELIPLCHPLLLSKVEVQLQAEPEHNRVRIESLCRLTGKTGVEMEALTAASVAALTIYDMCKAVQKDMVIGPVRLLAKSGGKSGDFKVDAHD.

Residues 75-77 and 113-114 each bind substrate; these read LCH and ME. The active site involves D128.

This sequence belongs to the MoaC family. As to quaternary structure, homohexamer; trimer of dimers.

The enzyme catalyses (8S)-3',8-cyclo-7,8-dihydroguanosine 5'-triphosphate = cyclic pyranopterin phosphate + diphosphate. Its pathway is cofactor biosynthesis; molybdopterin biosynthesis. Catalyzes the conversion of (8S)-3',8-cyclo-7,8-dihydroguanosine 5'-triphosphate to cyclic pyranopterin monophosphate (cPMP). The chain is Cyclic pyranopterin monophosphate synthase from Citrobacter koseri (strain ATCC BAA-895 / CDC 4225-83 / SGSC4696).